Consider the following 354-residue polypeptide: Guanine nucleotide-binding protein alpha-3 subunit (354 aa).

The N-myristoyl glycine moiety is linked to residue G2. A lipid anchor (S-palmitoyl cysteine) is attached at C4. In terms of domain architecture, G-alpha spans 33-354 (KECKILLLGS…TNALKDSGIL (322 aa)). The segment at 36–49 (KILLLGSGESGKST) is G1 motif. GTP is bound by residues 41–48 (GSGESGKS), 177–183 (LRARSKT), 202–206 (DVGGQ), 271–274 (NKID), and A326. 2 residues coordinate Mg(2+): S48 and T183. Residues 175–183 (DVLRARSKT) are G2 motif. The tract at residues 198–207 (IHLFDVGGQR) is G3 motif. Residues 267–274 (ILFLNKID) are G4 motif. The tract at residues 324 to 329 (TQATDT) is G5 motif.

This sequence belongs to the G-alpha family. G proteins are composed of 3 units; alpha, beta and gamma. The alpha chain contains the guanine nucleotide binding site.

Guanine nucleotide-binding proteins (G proteins) are involved as modulators or transducers in various transmembrane signaling systems. GPA3 plays an active role in transmission of the pheromone signal. The chain is Guanine nucleotide-binding protein alpha-3 subunit (GPA3) from Mycosarcoma maydis (Corn smut fungus).